The sequence spans 503 residues: Potassium voltage-gated channel subfamily V member 1 (503 aa).

2 disordered regions span residues 1-20 (MDLS…DSGS) and 171-192 (KKDT…QGPC). Residues 3–213 (LSPRNRPLLD…EKPGSSTAAR (211 aa)) lie on the Cytoplasmic side of the membrane. A compositionally biased stretch (low complexity) spans 10–20 (LLDSSSLDSGS). Basic and acidic residues predominate over residues 171-184 (KKDTDDQESQHESE). A helical transmembrane segment spans residues 214–234 (IFGVISIIFVAVSIVNMALMS). Residues 235 to 241 (AELSWLN) are Extracellular-facing. Residues 242–262 (LQLLEILEYVCISWFTGEFIL) traverse the membrane as a helical segment. Residues 263-279 (RFLCVKDRCHFLRKVPN) lie on the Cytoplasmic side of the membrane. The chain crosses the membrane as a helical span at residues 280–300 (IIDLLAILPFYITLLVESLSG). The Extracellular segment spans residues 301 to 312 (SHTTQELENVGR). Residues 313 to 334 (LVQVLRLLRALRMLKLGRHSTG) traverse the membrane as a helical; Voltage-sensor segment. At 335–348 (LRSLGMTITQCYEE) the chain is on the cytoplasmic side. Residues 349–369 (VGLLLLFLSVGISIFSTIEYF) traverse the membrane as a helical segment. Positions 395-400 (TVGYGD) match the Selectivity filter motif. Residues 410–430 (IVAFMCILSGILVLALPIAII) form a helical membrane-spanning segment. Over 431–503 (NDRFSACYFT…RSSGGDDFWF (73 aa)) the chain is Cytoplasmic.

Belongs to the potassium channel family. V (TC 1.A.1.2) subfamily. Kv8.1/KCNV1 sub-subfamily. Heteromultimer with KCNB1 and KCNB2. Interacts with KCNC4 and KCND1. In terms of tissue distribution, detected in brain, in neocortex, olfactory tubercle, hippocampus, dentate gyrus, piriform cortex and amygdala. Detected in Purkinje cells and granular cells of the cerebellum, in hippocampal CA4 neurons and neocortex pyramidal cells.

The protein localises to the cell membrane. Functionally, potassium channel subunit that does not form functional channels by itself. Modulates KCNB1 and KCNB2 channel activity by shifting the threshold for inactivation to more negative values and by slowing the rate of inactivation. Can down-regulate the channel activity of KCNB1, KCNB2, KCNC4 and KCND1, possibly by trapping them in intracellular membranes. The protein is Potassium voltage-gated channel subfamily V member 1 (Kcnv1) of Rattus norvegicus (Rat).